We begin with the raw amino-acid sequence, 228 residues long: MPLYSGDKISIGKFVIGNPMPIVVTSVFYEDVSTFVERLQTKVLSDKNLYEIRFDMFTEREISDEEELISAMREMDIDYIFTYRGKDARKYYETAIRKMAPAVDIDMDLIGKLEAKPTVTKVIGSYHTSDSEAMMSALDRMIDSDVDMVKVACSYSEDQEFLGDLKRIIDIRKNRRKPIAYVPMGRTFWRALAGYYVSDIVYAMADRPTAYGQPPADYYYQAFKALFY.

3-dehydroquinate contacts are provided by residues S26, 51–53, and R84; that span reads EIR. The Proton donor/acceptor role is filled by H127. Catalysis depends on K150, which acts as the Schiff-base intermediate with substrate. Residues R190, T209, and Q213 each contribute to the 3-dehydroquinate site.

The protein belongs to the type-I 3-dehydroquinase family. Homodimer.

The catalysed reaction is 3-dehydroquinate = 3-dehydroshikimate + H2O. It participates in metabolic intermediate biosynthesis; chorismate biosynthesis; chorismate from D-erythrose 4-phosphate and phosphoenolpyruvate: step 3/7. In terms of biological role, involved in the third step of the chorismate pathway, which leads to the biosynthesis of aromatic amino acids. Catalyzes the cis-dehydration of 3-dehydroquinate (DHQ) and introduces the first double bond of the aromatic ring to yield 3-dehydroshikimate. The protein is 3-dehydroquinate dehydratase of Thermoplasma acidophilum (strain ATCC 25905 / DSM 1728 / JCM 9062 / NBRC 15155 / AMRC-C165).